Reading from the N-terminus, the 547-residue chain is DNA ligase (547 aa).

Glu-244 provides a ligand contact to ATP. Lys-246 serves as the catalytic N6-AMP-lysine intermediate. ATP contacts are provided by Arg-251, Arg-266, Glu-295, Phe-334, Arg-405, and Lys-411.

It belongs to the ATP-dependent DNA ligase family. The cofactor is Mg(2+).

The catalysed reaction is ATP + (deoxyribonucleotide)n-3'-hydroxyl + 5'-phospho-(deoxyribonucleotide)m = (deoxyribonucleotide)n+m + AMP + diphosphate.. Its function is as follows. DNA ligase that seals nicks in double-stranded DNA during DNA replication, DNA recombination and DNA repair. The sequence is that of DNA ligase from Methanospirillum hungatei JF-1 (strain ATCC 27890 / DSM 864 / NBRC 100397 / JF-1).